The following is a 131-amino-acid chain: Large-conductance mechanosensitive channel (131 aa).

The next 3 helical transmembrane spans lie at isoleucine 14–leucine 34, isoleucine 38–threonine 58, and glycine 67–isoleucine 87.

This sequence belongs to the MscL family. In terms of assembly, homopentamer.

The protein resides in the cell membrane. Channel that opens in response to stretch forces in the membrane lipid bilayer. May participate in the regulation of osmotic pressure changes within the cell. The polypeptide is Large-conductance mechanosensitive channel (Bacillus velezensis (strain DSM 23117 / BGSC 10A6 / LMG 26770 / FZB42) (Bacillus amyloliquefaciens subsp. plantarum)).